A 310-amino-acid polypeptide reads, in one-letter code: Olfactory receptor 5W2 (310 aa).

The Extracellular portion of the chain corresponds to 1–25 (MDWENCSSLTDFFLLGITNNPEMKV). Asparagine 5 carries N-linked (GlcNAc...) asparagine glycosylation. The chain crosses the membrane as a helical span at residues 26–46 (TLFAVFLAVYIINFSANLGMI). Topologically, residues 47 to 54 (VLIRMDYQ) are cytoplasmic. Residues 55–75 (LHTPMYFFLSHLSFCDLCYST) form a helical membrane-spanning segment. The Extracellular segment spans residues 76 to 99 (ATGPKMLVDLLAKNKSIPFYGCAL). The chain crosses the membrane as a helical span at residues 100–120 (QFLVFCIFADSECLLLSVMAF). Residues 121 to 139 (DRYKAIINPLLYTVNMSSR) lie on the Cytoplasmic side of the membrane. The helical transmembrane segment at 140–160 (VCYLLLTGVYLVGIADALIHM) threads the bilayer. The Extracellular portion of the chain corresponds to 161-196 (TLAFRLCFCGSNEINHFFCDIPPLLLLSRSDTQVNE). A helical transmembrane segment spans residues 197–217 (LVLFTVFGFIELSTISGVFIS). The Cytoplasmic segment spans residues 218 to 237 (YCYIILSVLEIHSAEGRFKA). A helical membrane pass occupies residues 238-258 (LSTCTSHLSAVAIFQGTLLFM). Residues 259–271 (YFRPSSSYSLDQD) lie on the Extracellular side of the membrane. The chain crosses the membrane as a helical span at residues 272 to 292 (KMTSLFYTLVVPMLNPLIYSL). Over 293–310 (RNKDVKEALKKLKNKILF) the chain is Cytoplasmic.

This sequence belongs to the G-protein coupled receptor 1 family.

Its subcellular location is the cell membrane. In terms of biological role, odorant receptor. The protein is Olfactory receptor 5W2 (OR5W2) of Homo sapiens (Human).